The primary structure comprises 581 residues: AP2-like ethylene-responsive transcription factor AIL6 (581 aa).

Disordered regions lie at residues 105 to 132 and 205 to 240; these read VRYS…HHNQ and NNTN…TDSE. 2 stretches are compositionally biased toward low complexity: residues 108 to 122 and 218 to 232; these read SDNS…SLTQ and RGNN…NNNN. 2 DNA-binding regions (AP2/ERF) span residues 268-331 and 367-425; these read IYRG…TNFP and IYRG…TNFE.

It belongs to the AP2/ERF transcription factor family. AP2 subfamily. As to expression, expressed in roots, seedlings, hypocotyl, inflorescence, siliques, and pistils. Also detected at low levels in leaves.

The protein resides in the nucleus. Its function is as follows. Probably acts as a transcriptional activator. Binds to the GCC-box pathogenesis-related promoter element. May be involved in the regulation of gene expression by stress factors and by components of stress signal transduction pathways. The sequence is that of AP2-like ethylene-responsive transcription factor AIL6 from Arabidopsis thaliana (Mouse-ear cress).